The chain runs to 380 residues: Pregnancy-associated glycoprotein 4 (380 aa).

A signal peptide spans 1–15 (MKWLVLLGLVAFSEC). Positions 16–53 (IFKIPLRRVKTMRKTLSGKNMLNDVLKEHPYRLPQISF) are cleaved as a propeptide — activation peptide. Residues 71–377 (YVGNITIGTP…DRGNDRIGLA (307 aa)) form the Peptidase A1 domain. N74 carries N-linked (GlcNAc...) asparagine glycosylation. The active site involves D89. C102 and C107 are disulfide-bonded. N125 is a glycosylation site (N-linked (GlcNAc...) asparagine). A disulfide bridge connects residues C261 and C265. D270 is an active-site residue. C303 and C337 form a disulfide bridge.

The protein belongs to the peptidase A1 family. In terms of tissue distribution, trophoblast and placental tissue. Produced specifically in the invasive binucleate cells of the placenta.

Its subcellular location is the secreted. It is found in the extracellular space. The polypeptide is Pregnancy-associated glycoprotein 4 (Ovis aries (Sheep)).